The following is a 227-amino-acid chain: uncharacterized protein (227 aa).

2 helical membrane-spanning segments follow: residues cysteine 13 to serine 35 and isoleucine 155 to leucine 177. The segment at glycine 192–phenylalanine 227 is disordered. Residues glycine 217–phenylalanine 227 are compositionally biased toward pro residues.

It is found in the cell membrane. This is an uncharacterized protein from Treponema pallidum (strain Nichols).